A 134-amino-acid chain; its full sequence is Small ribosomal subunit protein uS8c (134 aa).

Belongs to the universal ribosomal protein uS8 family. Part of the 30S ribosomal subunit.

It is found in the plastid. The protein localises to the chloroplast. In terms of biological role, one of the primary rRNA binding proteins, it binds directly to 16S rRNA central domain where it helps coordinate assembly of the platform of the 30S subunit. The protein is Small ribosomal subunit protein uS8c (rps8) of Panax ginseng (Korean ginseng).